The primary structure comprises 873 residues: MTQIHQINDIDVHRITSGQVITDLTTAVKELVDNSIDANANQIEIIFKDYGLESIECSDNGDGIDPSNYEFLALKHYTSKIAKFQDVAKVQTLGFRGEALSSLCGIAKLSVITTTSPPKADKLEYDMVGHITSKTTTSRNKGTTVLVSQLFHNLPVRQKEFSKTFKRQFTKCLTVIQGYAIINAAIKFSVWNITPKGKKNLILSTMRNSSMRKNISSVFGAGGMRGLEEVDLVLDLNPFKNRMLGKYTDDPDFLDLDYKIRVKGYISQNSFGCGRNSKDRQFIYVNKRPVEYSTLLKCCNEVYKTFNNVQFPAVFLNLELPMSLIDVNVTPDKRVILLHNERAVIDIFKTTLSDYYNRQELALPKRMCSQSEQQAQKRLKTEVFDDRSTTHESDNENYHTARSESNQSNHAHFNSTTGVIDKSNGTELTSVMDGNYTNVTDVIGSECEVSVDSSVVLDEGNSSTPTKKLPSIKTDSQNLSDLNLNNFSNPEFQNITSPDKARSLEKVVEEPVYFDIDGEKFQEKAVLSQADGLVFVDNECHEHTNDCCHQERRGSTDTEQDDEADSIYAEIEPVEINVRTPLKNSRKSISKDNYRSLSDGLTHRKFEDEILEYNLSTKNFKEISKNGKQMSSIISKRKSEAQENIIKNKDELEDFEQGEKYLTLTVSKNDFKKMEVVGQFNLGFIIVTRKVDNKYDLFIVDQHASDEKYNFETLQAVTVFKSQKLIIPQPVELSVIDELVVLDNLPVFEKNGFKLKIDEEEEFGSRVKLLSLPTSKQTLFDLGDFNELIHLIKEDGGLRRDNIRCSKIRSMFAMRACRSSIMIGKPLNKKTMTRVVHNLSELDKPWNCPHGRPTMRHLMELRDWSSFSKDYEI.

The interval 1-357 (MTQIHQINDI…FKTTLSDYYN (357 aa)) is DNA- and ATP-binding. Basic and acidic residues predominate over residues 379 to 402 (LKTEVFDDRSTTHESDNENYHTAR). The disordered stretch occupies residues 379–423 (LKTEVFDDRSTTHESDNENYHTARSESNQSNHAHFNSTTGVIDKS). A Phosphoserine modification is found at S393. The segment covering 403–423 (SESNQSNHAHFNSTTGVIDKS) has biased composition (polar residues). Position 566 is a phosphoserine (S566). Residues 661-873 (YLTLTVSKND…WSSFSKDYEI (213 aa)) form an interaction with MLH1 region.

Belongs to the DNA mismatch repair MutL/HexB family. In terms of assembly, heterodimer of MLH1 and PMS1, called MutLalpha, which is the major MMR MutL activity correcting base-base mismatches as well as IDLs. The heterodimer binds double strand DNA independently of a mismatch with positive cooperativity and has more than one DNA binding site. Forms a ternary complex with either the MSH2-MSH6 (MutSalpha) or the MSH2-MSH3 heterodimer (MutSbeta), which recognize and bind to mismatch DNA. Ternary complex formation is promoted by ATP binding.

The protein localises to the nucleus. Its function is as follows. Required for DNA mismatch repair (MMR), correcting base-base mismatches and insertion-deletion loops (IDLs) resulting from DNA replication, DNA damage or from recombination events between non-identical sequences during meiosis. Component of the MutLalpha heterodimer that forms a ternary complex with the MutS heterodimers, which initially recognize the DNA mismatches. This complex is thought to be responsible for directing the downstream MMR events, including strand discrimination, excision, and resynthesis. Plays a major role in maintaining the genetic stability of simple sequence repeats and in the repair of heteroduplex sites present in meiotic recombination intermediates. In Saccharomyces cerevisiae (strain ATCC 204508 / S288c) (Baker's yeast), this protein is DNA mismatch repair protein PMS1 (PMS1).